The sequence spans 251 residues: Hydroxyacylglutathione hydrolase (251 aa).

Residues His55, His57, Asp59, His60, His112, Asp131, and His169 each coordinate Zn(2+).

The protein belongs to the metallo-beta-lactamase superfamily. Glyoxalase II family. As to quaternary structure, monomer. Requires Zn(2+) as cofactor.

It catalyses the reaction an S-(2-hydroxyacyl)glutathione + H2O = a 2-hydroxy carboxylate + glutathione + H(+). It participates in secondary metabolite metabolism; methylglyoxal degradation; (R)-lactate from methylglyoxal: step 2/2. Functionally, thiolesterase that catalyzes the hydrolysis of S-D-lactoyl-glutathione to form glutathione and D-lactic acid. In Erythrobacter litoralis (strain HTCC2594), this protein is Hydroxyacylglutathione hydrolase.